The chain runs to 61 residues: Chromatin protein Cren7 (61 aa).

This sequence belongs to the Cren7 family. In terms of assembly, monomer. In terms of processing, methylated at multiple sites, to varying extents.

The protein resides in the chromosome. It is found in the cytoplasm. A chromatin protein, binds double-stranded DNA without sequence specificity. Constrains negative DNA supercoils. The protein is Chromatin protein Cren7 of Caldivirga maquilingensis (strain ATCC 700844 / DSM 13496 / JCM 10307 / IC-167).